The primary structure comprises 1381 residues: Hepatocyte growth factor receptor (1381 aa).

Positions methionine 1–glycine 24 are cleaved as a signal peptide. The Extracellular segment spans residues glutamate 25 to threonine 932. A Sema domain is found at lysine 27–leucine 515. Asparagine 45 carries N-linked (GlcNAc...) asparagine glycosylation. 4 disulfide bridges follow: cysteine 95–cysteine 101, cysteine 98–cysteine 160, cysteine 133–cysteine 141, and cysteine 172–cysteine 175. The N-linked (GlcNAc...) asparagine glycan is linked to asparagine 106. Residue asparagine 149 is glycosylated (N-linked (GlcNAc...) asparagine). Asparagine 202 carries an N-linked (GlcNAc...) asparagine glycan. Intrachain disulfides connect cysteine 298–cysteine 363 and cysteine 385–cysteine 397. N-linked (GlcNAc...) asparagine glycosylation occurs at asparagine 399. 4 disulfide bridges follow: cysteine 520/cysteine 538, cysteine 526/cysteine 561, cysteine 529/cysteine 545, and cysteine 541/cysteine 551. IPT/TIG domains follow at residues proline 563–valine 655, proline 657–arginine 739, and proline 742–valine 836. An O-linked (Man) threonine glycan is attached at threonine 582. N-linked (GlcNAc...) asparagine glycosylation is found at asparagine 607 and asparagine 635. O-linked (Man) threonine glycans are attached at residues threonine 676 and threonine 761. 3 N-linked (GlcNAc...) asparagine glycosylation sites follow: asparagine 785, asparagine 879, and asparagine 930. Residues glycine 933–leucine 955 traverse the membrane as a helical segment. Residues lysine 956–threonine 1381 are Cytoplasmic-facing. Phosphoserine is present on serine 966. A Phosphothreonine modification is found at threonine 977. 3 positions are modified to phosphoserine: serine 990, serine 997, and serine 1000. The residue at position 1003 (tyrosine 1003) is a Phosphotyrosine. A Protein kinase domain is found at valine 1078 to isoleucine 1345. Residues isoleucine 1084–valine 1092 and lysine 1110 each bind ATP. The active-site Proton acceptor is aspartate 1204. The interval leucine 1212–threonine 1381 is interaction with RANBP9. Position 1230 is a phosphotyrosine (tyrosine 1230). Phosphotyrosine; by autocatalysis is present on residues tyrosine 1234 and tyrosine 1235. Threonine 1289 is modified (phosphothreonine). The tract at residues tryptophan 1320–valine 1359 is interaction with MUC20. Phosphotyrosine; by autocatalysis occurs at positions 1349 and 1356. Position 1365 is a phosphotyrosine (tyrosine 1365).

This sequence belongs to the protein kinase superfamily. Tyr protein kinase family. As to quaternary structure, heterodimer made of an alpha chain (50 kDa) and a beta chain (145 kDa) which are disulfide linked. Binds PLXNB1. Interacts when phosphorylated with downstream effectors including STAT3, PIK3R1, SRC, PCLG1, GRB2 and GAB1. Interacts with SPSB1, SPSB2 and SPSB4. Interacts with INPP5D/SHIP1. When phosphorylated at Tyr-1356, interacts with INPPL1/SHIP2. Interacts with RANBP9 and RANBP10, as well as SPSB1, SPSB2, SPSB3 and SPSB4. SPSB1 binding occurs in the presence and in the absence of HGF, however HGF treatment has a positive effect on this interaction. Interacts with MUC20; prevents interaction with GRB2 and suppresses hepatocyte growth factor-induced cell proliferation. Interacts with GRB10. Interacts with PTPN1 and PTPN2. Interacts with tensin TNS3. Interacts (when phosphorylated) with tensin TNS4 (via SH2 domain); the interaction increases MET protein stability by inhibiting MET endocytosis and subsequent lysosomal degradation. Autophosphorylated in response to ligand binding on Tyr-1234 and Tyr-1235 in the kinase domain leading to further phosphorylation of Tyr-1349 and Tyr-1356 in the C-terminal multifunctional docking site. Dephosphorylated by PTPRJ at Tyr-1349 and Tyr-1365. Dephosphorylated by PTPN1 and PTPN2. Post-translationally, ubiquitinated. Ubiquitination by CBL regulates the receptor stability and activity through proteasomal degradation. In terms of processing, O-mannosylation of IPT/TIG domains by TMEM260 is required for protein maturation. O-mannosylated residues are composed of single mannose glycans that are not elongated or modified.

It is found in the membrane. The enzyme catalyses L-tyrosyl-[protein] + ATP = O-phospho-L-tyrosyl-[protein] + ADP + H(+). Its activity is regulated as follows. In its inactive state, the C-terminal tail interacts with the catalytic domain and inhibits the kinase activity. Upon ligand binding, the C-terminal tail is displaced and becomes phosphorylated, thus increasing the kinase activity. In terms of biological role, receptor tyrosine kinase that transduces signals from the extracellular matrix into the cytoplasm by binding to hepatocyte growth factor/HGF ligand. Regulates many physiological processes including proliferation, scattering, morphogenesis and survival. Ligand binding at the cell surface induces autophosphorylation of MET on its intracellular domain that provides docking sites for downstream signaling molecules. Following activation by ligand, interacts with the PI3-kinase subunit PIK3R1, PLCG1, SRC, GRB2, STAT3 or the adapter GAB1. Recruitment of these downstream effectors by MET leads to the activation of several signaling cascades including the RAS-ERK, PI3 kinase-AKT, or PLCgamma-PKC. The RAS-ERK activation is associated with the morphogenetic effects while PI3K/AKT coordinates prosurvival effects. During embryonic development, MET signaling plays a role in gastrulation, development and migration of muscles and neuronal precursors, angiogenesis and kidney formation. In adults, participates in wound healing as well as organ regeneration and tissue remodeling. Also promotes differentiation and proliferation of hematopoietic cells. This Ateles geoffroyi (Black-handed spider monkey) protein is Hepatocyte growth factor receptor (MET).